Consider the following 885-residue polypeptide: 3-hydroxy-3-methylglutaryl-coenzyme A reductase (885 aa).

Over 1–9 the chain is Cytoplasmic; the sequence is MLSRLFRMH. Residues 10–39 traverse the membrane as a helical segment; the sequence is GLFVASHPWEVIVGTVTLTICMMSMNMFTG. At 40 to 56 the chain is on the lumenal side; that stretch reads NDKICGWNYECPKFEED. A helical transmembrane segment spans residues 57–78; the sequence is VLSSDIIILTITRCIAILYIYF. The region spanning 61 to 218 is the SSD domain; it reads DIIILTITRC…MTFFPACVSL (158 aa). Residues 75–78 carry the INSIG-binding motif motif; it reads YIYF. Topologically, residues 79–89 are cytoplasmic; that stretch reads QFQNLRQLGSK. Lys89 is covalently cross-linked (Glycyl lysine isopeptide (Lys-Gly) (interchain with G-Cter in ubiquitin)). Residues 90–114 form a helical membrane-spanning segment; the sequence is YILGIAGLFTIFSSFVFSTVVIHFL. Topologically, residues 115-123 are lumenal; sequence DKELTGLNE. Residues 124–149 form a helical membrane-spanning segment; sequence ALPFFLLLIDLSRASALAKFALSSNS. At 150–159 the chain is on the cytoplasmic side; the sequence is QDEVRENIAR. The helical transmembrane segment at 160 to 187 threads the bilayer; sequence GMAILGPTFTLDALVECLVIGVGTMSGV. Over 188–191 the chain is Lumenal; it reads RQLE. A helical membrane pass occupies residues 192–220; that stretch reads IMCCFGCMSVLATYFVFMTFFPACVSLVL. The Cytoplasmic portion of the chain corresponds to 221 to 248; that stretch reads ELSRESREGRPIWQLSHFARVLEGEENK. Lys248 is covalently cross-linked (Glycyl lysine isopeptide (Lys-Gly) (interchain with G-Cter in ubiquitin)). Residues 249 to 275 traverse the membrane as a helical segment; sequence PNPVTQRVKIIMSLGLVLVHAHSRWIA. Residues 276–314 are Lumenal-facing; that stretch reads DPSPQNSTADNSKVSLGLDENVSKRIEPSVSLWQFYLSK. 2 N-linked (GlcNAc...) asparagine glycosylation sites follow: Asn281 and Asn296. A helical transmembrane segment spans residues 315 to 339; that stretch reads MISMDIEQVITLTLALLLAVKYIFF. Residues 340–885 are Cytoplasmic-facing; that stretch reads EQAETESTLS…LQGTCTKKAA (546 aa). Residues Glu558, Lys688, and Asp764 each act as charge relay system in the active site. The active-site Proton donor is the His863. At Ser869 the chain carries Phosphoserine; by AMPK.

This sequence belongs to the HMG-CoA reductase family. Homotetramer. Homodimer. Interacts (via its SSD) with INSIG1; the interaction, accelerated by sterols, leads to the recruitment of HMGCR to AMFR/gp78 for its ubiquitination by the sterol-mediated ERAD pathway. Interacts with UBIAD1. In terms of processing, undergoes sterol-mediated ubiquitination and ER-associated degradation (ERAD). Accumulation of sterols in the endoplasmic reticulum (ER) membrane, triggers binding of the reductase to the ER membrane protein INSIG1 or INSIG2. The INSIG1 binding leads to the recruitment of the ubiquitin ligase, AMFR/gp78, RNF139 or RNF145, initiating ubiquitination of the reductase. The ubiquitinated reductase is then extracted from the ER membrane and delivered to cytosolic 26S proteosomes by a mechanism probably mediated by the ATPase Valosin-containing protein VCP/p97. The INSIG2-binding leads to the recruitment of the ubiquitin ligase RNF139, initiating ubiquitination of the reductase. Lys-248 is the main site of ubiquitination. Ubiquitination is enhanced by the presence of a geranylgeranylated protein. N-glycosylated. Deglycosylated by NGLY1 on release from the endoplasmic reticulum (ER) in a sterol-mediated manner. Post-translationally, phosphorylated. Phosphorylation at Ser-869 reduces the catalytic activity. As to expression, high expression found in liver, heart, kidney, bladder and subcutaneous fat. Lower levels in lung, uterus and large intestine. Lowest levels in cerebrum, spleen, spinal cord, stomach, ovary, longissimus muscle, and small intestine.

It is found in the endoplasmic reticulum membrane. It localises to the peroxisome membrane. The catalysed reaction is (R)-mevalonate + 2 NADP(+) + CoA = (3S)-3-hydroxy-3-methylglutaryl-CoA + 2 NADPH + 2 H(+). It functions in the pathway metabolic intermediate biosynthesis; (R)-mevalonate biosynthesis; (R)-mevalonate from acetyl-CoA: step 3/3. Its activity is regulated as follows. Regulated by a negative feedback mechanism through sterols and non-sterol metabolites derived from mevalonate. Phosphorylation at Ser-869 down-regulates the catalytic activity. In terms of biological role, catalyzes the conversion of (3S)-hydroxy-3-methylglutaryl-CoA (HMG-CoA) to mevalonic acid, the rate-limiting step in the synthesis of cholesterol and other isoprenoids, thus plays a critical role in cellular cholesterol homeostasis. This chain is 3-hydroxy-3-methylglutaryl-coenzyme A reductase (HMGCR), found in Sus scrofa (Pig).